The primary structure comprises 503 residues: Cytochrome P450 monooxygenase lnbC (503 aa).

The helical transmembrane segment at 14–34 (VVLLLSSVWIAVHLVLAAYNV) threads the bilayer. N-linked (GlcNAc...) asparagine glycans are attached at residues Asn94 and Asn169. Cys446 contributes to the heme binding site.

This sequence belongs to the cytochrome P450 family. The cofactor is heme.

It localises to the membrane. The protein operates within secondary metabolite biosynthesis. Cytochrome P450 monooxygenase; part of the lnb gene cluster that mediates the biosynthesis of diastereomeric piperazines. Lna and lnb clusters encode sets of enzymes that produce overlapping sets of previously undescribed metabolites such as piperazinomycin-like metabolites or morpholine. The lna and lnb biosynthetic pathways appear to be part of a signaling network that controls the formation of sclerotia, a resilient overwintering structure. One primary function of the non-canonical nonribosomal peptide synthetases lnaA and lnbA consists in the reduction of L-tyrosine. The presence in the clusters of tailoring enzymes such as the oxidoreductases lnaB, lnbB, lnaE or lnbE, as well as of the cytochrome P450 monooxygenases lnaC, lnaD, or lnbC, might explain formation of various diastereomeric piperazines. The chain is Cytochrome P450 monooxygenase lnbC from Aspergillus flavus (strain ATCC 200026 / FGSC A1120 / IAM 13836 / NRRL 3357 / JCM 12722 / SRRC 167).